The primary structure comprises 789 residues: Spermatogenesis-associated protein 20 (789 aa).

Positions 1 to 19 (MSHHSPPPPKHKGEHKGHG) are enriched in basic residues. Residues 1 to 65 (MSHHSPPPPK…CPPPAPQKTA (65 aa)) are disordered. Phosphoserine is present on residues serine 5 and serine 652.

As to expression, testis-specific and age-dependent (at protein level). Highly expressed. Expressed in round spermatids located in the inner half-layer of the seminiferous epithelium as well as in early elongated spermatids having cytoplasmic protrusions into the tubular lumen.

It localises to the secreted. May play a role in fertility regulation. This chain is Spermatogenesis-associated protein 20 (Spata20), found in Rattus norvegicus (Rat).